We begin with the raw amino-acid sequence, 208 residues long: Ribosomal RNA large subunit methyltransferase E (208 aa).

S-adenosyl-L-methionine-binding residues include Gly63, Trp65, Asp83, Asp99, and Asp124. Lys164 serves as the catalytic Proton acceptor.

The protein belongs to the class I-like SAM-binding methyltransferase superfamily. RNA methyltransferase RlmE family.

It is found in the cytoplasm. The enzyme catalyses uridine(2552) in 23S rRNA + S-adenosyl-L-methionine = 2'-O-methyluridine(2552) in 23S rRNA + S-adenosyl-L-homocysteine + H(+). Its function is as follows. Specifically methylates the uridine in position 2552 of 23S rRNA at the 2'-O position of the ribose in the fully assembled 50S ribosomal subunit. The sequence is that of Ribosomal RNA large subunit methyltransferase E from Salmonella agona (strain SL483).